We begin with the raw amino-acid sequence, 502 residues long: Chromosomal replication initiator protein DnaA (502 aa).

The tract at residues 1–112 (MADDLSLGFT…PSTDHIDDNS (112 aa)) is domain I, interacts with DnaA modulators. Residues 113-161 (SSADVLLTDDCGTDTDENYGEPLTGEYQGLPTYFTERPHHTESTVTGGT) are domain II. Residues 162–378 (SLNRRYTFET…GALIRVTAFA (217 aa)) are domain III, AAA+ region. ATP-binding residues include Gly206, Gly208, Lys209, and Thr210. The segment at 379 to 502 (SLNKTAIDKA…TTRIRQRSKR (124 aa)) is domain IV, binds dsDNA.

The protein belongs to the DnaA family. Oligomerizes as a right-handed, spiral filament on DNA at oriC.

Its subcellular location is the cytoplasm. In terms of biological role, plays an essential role in the initiation and regulation of chromosomal replication. ATP-DnaA binds to the origin of replication (oriC) to initiate formation of the DNA replication initiation complex once per cell cycle. Binds the DnaA box (a 9 base pair repeat at the origin) and separates the double-stranded (ds)DNA. Forms a right-handed helical filament on oriC DNA; dsDNA binds to the exterior of the filament while single-stranded (ss)DNA is stabiized in the filament's interior. The ATP-DnaA-oriC complex binds and stabilizes one strand of the AT-rich DNA unwinding element (DUE), permitting loading of DNA polymerase. After initiation quickly degrades to an ADP-DnaA complex that is not apt for DNA replication. Binds acidic phospholipids. The polypeptide is Chromosomal replication initiator protein DnaA (Mycobacterium leprae (strain TN)).